A 179-amino-acid polypeptide reads, in one-letter code: Large ribosomal subunit protein uL5 (179 aa).

It belongs to the universal ribosomal protein uL5 family. As to quaternary structure, part of the 50S ribosomal subunit; part of the 5S rRNA/L5/L18/L25 subcomplex. Contacts the 5S rRNA and the P site tRNA. Forms a bridge to the 30S subunit in the 70S ribosome.

In terms of biological role, this is one of the proteins that bind and probably mediate the attachment of the 5S RNA into the large ribosomal subunit, where it forms part of the central protuberance. In the 70S ribosome it contacts protein S13 of the 30S subunit (bridge B1b), connecting the 2 subunits; this bridge is implicated in subunit movement. Contacts the P site tRNA; the 5S rRNA and some of its associated proteins might help stabilize positioning of ribosome-bound tRNAs. In Alkaliphilus metalliredigens (strain QYMF), this protein is Large ribosomal subunit protein uL5.